The following is a 679-amino-acid chain: Glycine--tRNA ligase beta subunit (679 aa).

This sequence belongs to the class-II aminoacyl-tRNA synthetase family. As to quaternary structure, tetramer of two alpha and two beta subunits.

It is found in the cytoplasm. It catalyses the reaction tRNA(Gly) + glycine + ATP = glycyl-tRNA(Gly) + AMP + diphosphate. This Streptococcus uberis (strain ATCC BAA-854 / 0140J) protein is Glycine--tRNA ligase beta subunit.